An 80-amino-acid polypeptide reads, in one-letter code: U-Asilidin(1)-Dg12 (80 aa).

Residues 1 to 24 (MARLLVVSVGVFLAVIMLSSETMS) form the signal peptide. A propeptide spanning residues 25–46 (LPAGENLPALTLFEAQNQLIGL) is cleaved from the precursor. 3 disulfide bridges follow: C53–C67, C60–C71, and C66–C78.

This sequence belongs to the asilidin-1 family. As to expression, expressed by the venom gland.

The protein localises to the secreted. Functionally, neurotoxin that may modulate ions channels (other than those tested). In vivo, induces neurotoxic effects when injected into insects (tested on L.cuprina and A.domesticus). This is U-Asilidin(1)-Dg12 from Dolopus genitalis (Giant Australian assassin fly).